We begin with the raw amino-acid sequence, 172 residues long: Translationally-controlled tumor protein (172 aa).

One can recognise a TCTP domain in the interval Met1–Cys172. Ser46 is subject to Phosphoserine; by PLK1. Position 53 is a phosphoserine (Ser53). The residue at position 64 (Ser64) is a Phosphoserine; by PLK1. Residues Val70–Cys172 form a required for reduction of TSC22D1 protein stability region.

This sequence belongs to the TCTP family. In terms of assembly, homodimer. Interacts with STEAP3. Interacts with TSC22D1; interaction results in the destabilization of TSC22D1 protein.

It localises to the cytoplasm. Functionally, involved in calcium binding and microtubule stabilization. Acts as a negative regulator of TSC22D1-mediated apoptosis, via interaction with and destabilization of TSC22D1 protein. The protein is Translationally-controlled tumor protein (TPT1) of Bos taurus (Bovine).